The chain runs to 274 residues: Eukaryotic translation initiation factor 3 subunit G (274 aa).

3 positions are modified to phosphoserine: Ser146, Ser164, and Ser171. The segment at 149 to 170 (ANTSAAATPEPDTDASGKYVPP) is disordered. The RRM domain maps to 191–270 (TTLKISQLNT…LILHLEWPKK (80 aa)).

Belongs to the eIF-3 subunit G family. As to quaternary structure, component of the eukaryotic translation initiation factor 3 (eIF-3) complex.

Its subcellular location is the cytoplasm. RNA-binding component of the eukaryotic translation initiation factor 3 (eIF-3) complex, which is involved in protein synthesis of a specialized repertoire of mRNAs and, together with other initiation factors, stimulates binding of mRNA and methionyl-tRNAi to the 40S ribosome. The eIF-3 complex specifically targets and initiates translation of a subset of mRNAs involved in cell proliferation. This subunit can bind 18S rRNA. The chain is Eukaryotic translation initiation factor 3 subunit G from Meyerozyma guilliermondii (strain ATCC 6260 / CBS 566 / DSM 6381 / JCM 1539 / NBRC 10279 / NRRL Y-324) (Yeast).